The sequence spans 109 residues: MKLAIDCPDCRKMILALPRRAGRGAIWLYRHSLSPLVGYHCRHLPTCSSYGDEAIERFGLWAGGWMTLARLLRCQPWGTHGIDNVPLTAPAGARWYLPWRYARWRGVNG.

The protein belongs to the UPF0161 family.

It is found in the cell inner membrane. Functionally, could be involved in insertion of integral membrane proteins into the membrane. The protein is Putative membrane protein insertion efficiency factor of Rhodopseudomonas palustris (strain BisB18).